Consider the following 473-residue polypeptide: Photosystem II CP43 reaction center protein (473 aa).

A propeptide spanning residues 1–14 is cleaved from the precursor; that stretch reads MKTLYSLRRFYPVE. Thr15 bears the N-acetylthreonine mark. At Thr15 the chain carries Phosphothreonine. 5 helical membrane-spanning segments follow: residues 69–93, 134–155, 178–200, 255–275, and 291–312; these read LFEVAHFVPEKPMYEQGLILLPHLA, LLGPETLEESFPFFGYVWKDRN, KALYFGGVYDTWAPGGGDVRKIT, KPFAWARRALVWSGEAYLSYS, and WFNNTAYPSEFYGPTGPEASQA. Glu367 contacts [CaMn4O5] cluster. The helical transmembrane segment at 447–471 threads the bilayer; it reads RARAAAAGFEKGIDRDFEPVLSMTP.

Belongs to the PsbB/PsbC family. PsbC subfamily. In terms of assembly, PSII is composed of 1 copy each of membrane proteins PsbA, PsbB, PsbC, PsbD, PsbE, PsbF, PsbH, PsbI, PsbJ, PsbK, PsbL, PsbM, PsbT, PsbX, PsbY, PsbZ, Psb30/Ycf12, at least 3 peripheral proteins of the oxygen-evolving complex and a large number of cofactors. It forms dimeric complexes. Binds multiple chlorophylls and provides some of the ligands for the Ca-4Mn-5O cluster of the oxygen-evolving complex. It may also provide a ligand for a Cl- that is required for oxygen evolution. PSII binds additional chlorophylls, carotenoids and specific lipids. serves as cofactor.

The protein localises to the plastid. The protein resides in the chloroplast thylakoid membrane. Its function is as follows. One of the components of the core complex of photosystem II (PSII). It binds chlorophyll and helps catalyze the primary light-induced photochemical processes of PSII. PSII is a light-driven water:plastoquinone oxidoreductase, using light energy to abstract electrons from H(2)O, generating O(2) and a proton gradient subsequently used for ATP formation. This Buxus microphylla (Littleleaf boxwood) protein is Photosystem II CP43 reaction center protein.